A 666-amino-acid chain; its full sequence is Long chain acyl-CoA synthetase 4 (666 aa).

Residue 228–239 coordinates ATP; the sequence is IMYTSGTTGDPK. Positions 495-519 are fatty acid-binding; that stretch reads DGWLHTGDVGEWQPDGSMKIIDRKK.

The protein belongs to the ATP-dependent AMP-binding enzyme family. Mg(2+) serves as cofactor.

It carries out the reaction a long-chain fatty acid + ATP + CoA = a long-chain fatty acyl-CoA + AMP + diphosphate. It participates in lipid metabolism; fatty acid metabolism. Its function is as follows. Activation of long-chain fatty acids for both synthesis of cellular lipids, and degradation via beta-oxidation. Preferentially uses palmitate, palmitoleate, oleate and linoleate. This Arabidopsis thaliana (Mouse-ear cress) protein is Long chain acyl-CoA synthetase 4 (LACS4).